The primary structure comprises 281 residues: DegV domain-containing protein (281 aa).

One can recognise a DegV domain in the interval 3–280 (WKIVSDSGCD…EGGLLMGYEI (278 aa)). Hexadecanoate contacts are provided by S63 and S91.

May bind long-chain fatty acids, such as palmitate, and may play a role in lipid transport or fatty acid metabolism. The polypeptide is DegV domain-containing protein (Streptococcus gordonii).